The chain runs to 82 residues: Acyl carrier protein (82 aa).

Residues 3–81 (LSREKVLESI…DAVDFIIAAK (79 aa)) form the Carrier domain. The residue at position 41 (serine 41) is an O-(pantetheine 4'-phosphoryl)serine.

The protein belongs to the acyl carrier protein (ACP) family. Post-translationally, 4'-phosphopantetheine is transferred from CoA to a specific serine of apo-ACP by AcpS. This modification is essential for activity because fatty acids are bound in thioester linkage to the sulfhydryl of the prosthetic group.

It is found in the cytoplasm. Its pathway is lipid metabolism; fatty acid biosynthesis. Carrier of the growing fatty acid chain in fatty acid biosynthesis. This is Acyl carrier protein from Tropheryma whipplei (strain Twist) (Whipple's bacillus).